A 183-amino-acid polypeptide reads, in one-letter code: Guanylate kinase (183 aa).

The Guanylate kinase-like domain maps to 4–182 (GRVVVLTGPS…AITALEAAIF (179 aa)). 11 to 18 (GPSGVGKG) lines the ATP pocket.

This sequence belongs to the guanylate kinase family.

It localises to the cytoplasm. It catalyses the reaction GMP + ATP = GDP + ADP. The enzyme catalyses dZMP + ATP = dZDP + ADP. The protein operates within purine metabolism. Essential for recycling GMP and indirectly, cGMP. Functionally, (Microbial infection) Catalyzes the phosphorylation of dZMP to dZDP, when the bacterium is infected by a phage that produces the substrate for the synthesis of dZTP (2- amino-2'-deoxyadenosine 5'-triphosphate), which is then used by the phage as a DNA polymerase substrate. This Synechococcus elongatus (strain ATCC 33912 / PCC 7942 / FACHB-805) (Anacystis nidulans R2) protein is Guanylate kinase.